Consider the following 561-residue polypeptide: Putative periplasmic trehalase (561 aa).

Positions 1-30 (MKSPAPSRPQKMALIPACIFLCFAALSVQA) are cleaved as a signal peptide. Substrate contacts are provided by residues arginine 148, 155–156 (WD), asparagine 192, 201–203 (RSQ), 273–275 (RPE), and glycine 306. Active-site proton donor/acceptor residues include aspartate 308 and glutamate 492. Residue glutamate 507 coordinates substrate. Residues 535-561 (CDNVPATRPLSESTTQPVKQKEAEPTP) form a disordered region.

Belongs to the glycosyl hydrolase 37 family. In terms of assembly, monomer.

It is found in the periplasm. It catalyses the reaction alpha,alpha-trehalose + H2O = alpha-D-glucose + beta-D-glucose. Its function is as follows. Provides the cells with the ability to utilize trehalose at high osmolarity by splitting it into glucose molecules that can subsequently be taken up by the phosphotransferase-mediated uptake system. This is Putative periplasmic trehalase from Escherichia coli O157:H7.